Reading from the N-terminus, the 1194-residue chain is Immunoglobulin superfamily member 3 (1194 aa).

A signal peptide spans 1 to 19 (MKCFFPVLSCLAVLGVVSA). Ig-like C2-type domains are found at residues 20–138 (QRQV…AKMN), 143–262 (PDSL…WYAM), 276–386 (PTDK…KTVT), 401–539 (PIIV…ISIT), 545–661 (FAVT…WTRL), 676–803 (PVTK…EEVS), 813–945 (PDSR…TALT), and 949–1097 (PDAS…YRLT). Residues 20 to 1124 (QRQVTVQEGP…LQSIICSNDA (1105 aa)) are Extracellular-facing. Cystine bridges form between Cys-42–Cys-120 and Cys-167–Cys-246. Asn-43 carries an N-linked (GlcNAc...) asparagine glycan. Residues 250-252 (EWI) carry the EWI motif motif. Cys-302 and Cys-376 form a disulfide bridge. The N-linked (GlcNAc...) asparagine glycan is linked to Asn-418. 2 cysteine pairs are disulfide-bonded: Cys-432-Cys-511 and Cys-566-Cys-645. N-linked (GlcNAc...) asparagine glycosylation occurs at Asn-655. 3 cysteine pairs are disulfide-bonded: Cys-701/Cys-782, Cys-838/Cys-918, and Cys-974/Cys-1080. The N-linked (GlcNAc...) asparagine glycan is linked to Asn-842. Positions 997–1033 (AGGKRSSPGLEEQEEEREEEEEEDDDDDDDPTERTAL) are disordered. Over residues 1007–1027 (EEQEEEREEEEEEDDDDDDDP) the composition is skewed to acidic residues. The N-linked (GlcNAc...) asparagine glycan is linked to Asn-1077. The chain crosses the membrane as a helical span at residues 1125–1145 (LFYFVFFYPFPIFGILIITIL). Topologically, residues 1146–1194 (LVRFKSRNSSKNSDGKNGVPLLWIKEPHLNYSPTCLEPPVLSIHPGAID) are cytoplasmic.

Expressed in a wide range of tissues with High expression in Placenta, kidney and lung.

The protein localises to the membrane. The sequence is that of Immunoglobulin superfamily member 3 (IGSF3) from Homo sapiens (Human).